The chain runs to 232 residues: Sugar fermentation stimulation protein homolog (232 aa).

This sequence belongs to the SfsA family.

The sequence is that of Sugar fermentation stimulation protein homolog from Ruegeria sp. (strain TM1040) (Silicibacter sp.).